Reading from the N-terminus, the 574-residue chain is Phenylalanine--tRNA ligase beta subunit (574 aa).

In terms of domain architecture, B5 spans Leu278–Pro353. Residues Asp331, Asp337, Glu340, and Asp341 each coordinate Mg(2+).

The protein belongs to the phenylalanyl-tRNA synthetase beta subunit family. Type 2 subfamily. Tetramer of two alpha and two beta subunits. It depends on Mg(2+) as a cofactor.

Its subcellular location is the cytoplasm. The catalysed reaction is tRNA(Phe) + L-phenylalanine + ATP = L-phenylalanyl-tRNA(Phe) + AMP + diphosphate + H(+). The polypeptide is Phenylalanine--tRNA ligase beta subunit (Thermococcus kodakarensis (strain ATCC BAA-918 / JCM 12380 / KOD1) (Pyrococcus kodakaraensis (strain KOD1))).